The chain runs to 198 residues: Probable GTP-binding protein EngB (198 aa).

The region spanning 22-195 (DLPEIALAGR…WKAIHKFTKT (174 aa)) is the EngB-type G domain. GTP-binding positions include 30-37 (GRSNVGKS), 57-61 (GKTQT), 75-78 (DVPG), 142-145 (TKAD), and 174-176 (FSS). Residues Ser37 and Thr59 each coordinate Mg(2+).

The protein belongs to the TRAFAC class TrmE-Era-EngA-EngB-Septin-like GTPase superfamily. EngB GTPase family. It depends on Mg(2+) as a cofactor.

Its function is as follows. Necessary for normal cell division and for the maintenance of normal septation. The polypeptide is Probable GTP-binding protein EngB (Bacillus cereus (strain B4264)).